We begin with the raw amino-acid sequence, 312 residues long: tRNA (adenine(58)-N(1))-methyltransferase catalytic subunit trmt61a (312 aa).

S-adenosyl-L-methionine contacts are provided by residues Leu85, Ser112 to Ser114, Glu133, Arg138, Asp161 to Ala162, and Asp183.

This sequence belongs to the class I-like SAM-binding methyltransferase superfamily. TRM61 family. In terms of assembly, heterotetramer; composed of two copies of trmt6 and two copies of trmt61a.

Its subcellular location is the nucleus. It catalyses the reaction adenosine(58) in tRNA + S-adenosyl-L-methionine = N(1)-methyladenosine(58) in tRNA + S-adenosyl-L-homocysteine + H(+). With respect to regulation, inhibited by calcium and magnesium ions and spermidine. Enhanced by KCl, NaCl and NH(4)Cl in concentrations from 0.1-0.25 M. Concentrations of more than 0.3 M are inhibitory. Its function is as follows. Catalytic subunit of tRNA (adenine-N(1)-)-methyltransferase, which catalyzes the formation of N(1)-methyladenine at position 58 (m1A58) in initiator methionyl-tRNA. In Dictyostelium discoideum (Social amoeba), this protein is tRNA (adenine(58)-N(1))-methyltransferase catalytic subunit trmt61a (trmt61a).